The following is a 290-amino-acid chain: Coiled-coil domain-containing protein 137 (290 aa).

Disordered stretches follow at residues 1-92 (MARP…EAQV), 98-117 (LEKEAKGEEPDIAVPKFKQR), 139-181 (LSKN…EARA), and 269-290 (RQEMTPAQPPGSSFQRQGHACL). A compositionally biased stretch (low complexity) spans 20 to 39 (SGQPQGRRQQQAQGQQRSAS). Residues 56–79 (KNQDEQEIPFRLREIMRSRQEMKK) are compositionally biased toward basic and acidic residues. Residues 66–89 (RLREIMRSRQEMKKTLSNKKRKKE) are a coiled coil. The segment covering 154–163 (PKKEKSERKK) has biased composition (basic and acidic residues). The stretch at 155 to 192 (KKEKSERKKAFQKRRLEKAQRKREARAVDRLEQELLKD) forms a coiled coil. Positions 164–178 (AFQKRRLEKAQRKRE) are enriched in basic residues.

Its subcellular location is the chromosome. The protein is Coiled-coil domain-containing protein 137 (Ccdc137) of Mus musculus (Mouse).